The chain runs to 887 residues: Dystrophin-like protein 1 (887 aa).

The PID domain occupies 30–197 (YQHGIHFEAK…KISMQSEDEA (168 aa)). Basic and acidic residues-rich tracts occupy residues 176 to 186 (MQEKHEDEAAK) and 205 to 216 (IEERGGREEDSR). Disordered stretches follow at residues 176 to 254 (MQEK…GTAI), 506 to 606 (EIHH…QYER), 641 to 753 (QFDM…KNTA), 804 to 839 (IAEE…PPNT), and 853 to 887 (NVDR…GYPQ). A compositionally biased stretch (polar residues) spans 242–254 (KPSTTSSSGGTAI). The stretch at 434–506 (QLMRSQLDQA…QMLETKITSE (73 aa)) forms a coiled coil. The segment covering 510–519 (SSSQPPQHQP) has biased composition (low complexity). Residues 573 to 588 (KESKERRKDEGTRTEP) are compositionally biased toward basic and acidic residues. The segment covering 597–606 (DYSSSDQYER) has biased composition (polar residues). Composition is skewed to polar residues over residues 816-827 (NRNNLPSSTNSS) and 863-887 (SLLT…GYPQ).

As to quaternary structure, component of the dystrophin glycoprotein complex (DGC). Interacts with zyx-1. In terms of tissue distribution, expressed in muscles of the head, body wall and vulva. In some animals, weaker expression is observed in the intestinal muscles (at protein level). Isoform a is expressed in lateral neurons SDQL and SDQR.

Together with dys-1 and hlh-1, participates in a common muscular function. The protein is Dystrophin-like protein 1 of Caenorhabditis elegans.